A 377-amino-acid chain; its full sequence is Trans-enoyl reductase FMN2 (377 aa).

Positions 7-370 constitute an Enoyl reductase (ER) domain; it reads NASGGYCLNS…DGVIRGKKLV (364 aa). Residues 143 to 173 are disordered; that stretch reads LSDMTGNGRSNGYTNGHTNGHTNGHSKGEEE. Over residues 144 to 155 the composition is skewed to polar residues; sequence SDMTGNGRSNGY. Residues 156–167 show a composition bias toward low complexity; the sequence is TNGHTNGHTNGH. NADP(+) contacts are provided by residues 186-189, 209-212, Tyr-227, and 274-275; these read ASAS, SPAN, and LD.

This sequence belongs to the zinc-containing alcohol dehydrogenase family.

Its pathway is secondary metabolite biosynthesis. Its function is as follows. Trans-enoyl reductase; part of the gene cluster that mediates the biosynthesis of fusamarins, isocoumarin derivatives that show moderate cytotoxicity with IC(50) values between 1 and 50 uM. The polyketide synthase FMN1 probably synthesizes two different polyketides, a tetra- and a pentaketide, containinga varying number of double bonds depending on the selective actions of the trans-enoyl reductase FMN2. Chain fusion will presumably be mediated by the KS domain before finally offloading is catalyzed by the alpha/beta hydrolase fold enzyme FMN3. This is Trans-enoyl reductase FMN2 from Fusarium mangiferae (Mango malformation disease fungus).